The following is a 500-amino-acid chain: MPKNPSQYILALDLGTTGNRAILFNHQGEIAGQSYQELTQYYPHPGWLEHDAIEIWQDTCNIIKKVLKTTNIDITAIAAIGLTVQRETCLLWDKTTGKPLHNAIVWQDRRTSSLCHQLKTEGKSVEITQKTGLIIDPYFSATKLTWLLEWVKANNPSVALKNVLAGTIDAWILWNLTGGQVHATDHSNASRTMLMNLDTRSWDRDLMDLFGIPERIMPEIRPSLSYFGETDPQLFGAKIPITAIFGDQQAALFAHGCNRPGLLKCTYGTGSFLIIQAGTQVMRSHHQLLSTVAWSTENSAYYALEGAIFTSGAAIQWLRDGLKIINNAAETETLSRQVTDTKGVYFVPALSGLGAPHWDMNARGAFFGITGGVGREHLVRAVLEAIAYQVKEVVDAINLESTLKVAALKVDGGASQNDFLMQFQADALGVPIERPLILDATAQGAAFGAGLTVGFWDDYDSLIASRIIDKIFEPGEDREQVQANFIPWQRAVERAKNWVH.

Threonine 16 contributes to the ADP binding site. Residues threonine 16 and threonine 17 each coordinate ATP. Threonine 16 lines the sn-glycerol 3-phosphate pocket. Arginine 20 serves as a coordination point for ADP. 4 residues coordinate sn-glycerol 3-phosphate: arginine 86, glutamate 87, tyrosine 138, and aspartate 247. The glycerol site is built by arginine 86, glutamate 87, tyrosine 138, aspartate 247, and glutamine 248. The ADP site is built by threonine 269 and glycine 312. ATP contacts are provided by threonine 269, glycine 312, glutamine 316, and glycine 413. ADP-binding residues include glycine 413 and asparagine 417.

The protein belongs to the FGGY kinase family.

The enzyme catalyses glycerol + ATP = sn-glycerol 3-phosphate + ADP + H(+). Its pathway is polyol metabolism; glycerol degradation via glycerol kinase pathway; sn-glycerol 3-phosphate from glycerol: step 1/1. Inhibited by fructose 1,6-bisphosphate (FBP). Key enzyme in the regulation of glycerol uptake and metabolism. Catalyzes the phosphorylation of glycerol to yield sn-glycerol 3-phosphate. The chain is Glycerol kinase from Rippkaea orientalis (strain PCC 8801 / RF-1) (Cyanothece sp. (strain PCC 8801)).